Consider the following 279-residue polypeptide: Protein phosphatase 1 regulatory subunit 3E (279 aa).

Residues serine 16 and serine 33 each carry the phosphoserine modification. The interval 28–89 (RSQRPSLEEE…RSPDTRKRVR (62 aa)) is disordered. The segment covering 51–65 (ARSRAHVPGRGRRAR) has biased composition (basic residues). The residue at position 66 (serine 66) is a Phosphoserine. A PP1-binding motif motif is present at residues 87–90 (RVRF). A CBM21 domain is found at 154 to 259 (AARLQAQRIC…NNGGRDYALL (106 aa)). The tract at residues 176–198 (GSARVLDLAYEKRVSVRWSADGW) is glycogen-binding motif. Residues 248–256 (WDNNGGRDY) form a substrate-binding motif region.

As to expression, expressed in liver and heart, with low levels in skeletal muscle.

In terms of biological role, acts as a glycogen-targeting subunit for PP1. PP1 is involved in glycogen metabolism and contributes to the activation of glycogen synthase leading to an increase in glycogen synthesis. In Rattus norvegicus (Rat), this protein is Protein phosphatase 1 regulatory subunit 3E (Ppp1r3e).